The chain runs to 178 residues: Cytochrome b6-f complex iron-sulfur subunit (178 aa).

The helical transmembrane segment at 20–42 threads the bilayer; sequence LLTFGTATGVALGALYPVANYFM. The Rieske domain occupies 65 to 161; that stretch reads KTGWLASHQA…VDVDDDAVLV (97 aa). The [2Fe-2S] cluster site is built by Cys-107, His-109, Cys-125, and His-128. The cysteines at positions 112 and 127 are disulfide-linked.

It belongs to the Rieske iron-sulfur protein family. The 4 large subunits of the cytochrome b6-f complex are cytochrome b6, subunit IV (17 kDa polypeptide, PetD), cytochrome f and the Rieske protein, while the 4 small subunits are PetG, PetL, PetM and PetN. The complex functions as a dimer. The cofactor is [2Fe-2S] cluster.

It localises to the cellular thylakoid membrane. It carries out the reaction 2 oxidized [plastocyanin] + a plastoquinol + 2 H(+)(in) = 2 reduced [plastocyanin] + a plastoquinone + 4 H(+)(out). Functionally, component of the cytochrome b6-f complex, which mediates electron transfer between photosystem II (PSII) and photosystem I (PSI), cyclic electron flow around PSI, and state transitions. This is Cytochrome b6-f complex iron-sulfur subunit from Prochlorococcus marinus subsp. pastoris (strain CCMP1986 / NIES-2087 / MED4).